The sequence spans 117 residues: uncharacterized protein (117 aa).

An N-terminal signal peptide occupies residues 1 to 20 (MAAVHLYIISFTALMISSTS).

This is an uncharacterized protein from Saccharomyces cerevisiae (strain ATCC 204508 / S288c) (Baker's yeast).